The primary structure comprises 459 residues: Peptidyl-prolyl cis-trans isomerase FKBP4 (459 aa).

At Met1 the chain carries N-acetylmethionine; in peptidyl-prolyl cis-trans isomerase FKBP4; alternate. The tract at residues 1–22 is disordered; it reads MTAEETKAAESGAQSAPLRLEG. The residue at position 2 (Thr2) is an N-acetylthreonine; in peptidyl-prolyl cis-trans isomerase FKBP4, N-terminally processed; partial. One can recognise a PPIase FKBP-type 1 domain in the interval 50 to 138; sequence GDRVFVHYTG…VFEVELFEFK (89 aa). Residue Thr143 is modified to Phosphothreonine. A PPIase FKBP-type 2 domain is found at 167-253; that stretch reads GALVEVALEG…KYEIHLKSFE (87 aa). Tyr220 is modified (phosphotyrosine). An interaction with tubulin region spans residues 267–400; that stretch reads LEQSTIVKER…AQLVVCQQRI (134 aa). TPR repeat units follow at residues 270 to 303, 319 to 352, and 354 to 386; these read STIV…LEYE, LASH…DSNN, and KGLF…YPSN. Lys282 carries the N6-acetyllysine modification. Position 373 is an omega-N-methylarginine (Arg373). Positions 423 to 459 are disordered; sequence TKAKATVAAGDQPADAEMRDEPKNDVAGGQPQVEAEA.

Homodimer. Interacts with GLMN. Associates with HSP90AA1 and HSP70 in steroid hormone receptor complexes. Also interacts with peroxisomal phytanoyl-CoA alpha-hydroxylase (PHYH). Interacts with NR3C1 and dynein. Interacts with HSF1 in the HSP90 complex. Associates with tubulin. Interacts with MAPT/TAU. Interacts (via TPR domain) with S100A1, S100A2 and S100A6; the interaction is Ca(2+) dependent. Interaction with S100A1 and S100A2 (but not with S100A6) leads to inhibition of FKBP4-HSP90 interaction. Interacts with dynein; causes partially NR3C1 transport to the nucleus.

It is found in the cytoplasm. The protein resides in the cytosol. The protein localises to the mitochondrion. It localises to the nucleus. Its subcellular location is the cytoskeleton. The catalysed reaction is [protein]-peptidylproline (omega=180) = [protein]-peptidylproline (omega=0). With respect to regulation, inhibited by FK506. Its function is as follows. Immunophilin protein with PPIase and co-chaperone activities. Component of unligated steroid receptors heterocomplexes through interaction with heat-shock protein 90 (HSP90). May play a role in the intracellular trafficking of heterooligomeric forms of steroid hormone receptors between cytoplasm and nuclear compartments. The isomerase activity controls neuronal growth cones via regulation of TRPC1 channel opening. Also acts as a regulator of microtubule dynamics by inhibiting MAPT/TAU ability to promote microtubule assembly. May have a protective role against oxidative stress in mitochondria. This Bos taurus (Bovine) protein is Peptidyl-prolyl cis-trans isomerase FKBP4 (FKBP4).